Here is a 288-residue protein sequence, read N- to C-terminus: Protease HtpX (288 aa).

2 helical membrane-spanning segments follow: residues 5–25 (IALF…VMSL) and 34–54 (SGLL…SLLL). His-140 serves as a coordination point for Zn(2+). The active site involves Glu-141. His-144 lines the Zn(2+) pocket. Transmembrane regions (helical) follow at residues 155-175 (LLQG…GGII) and 190-210 (FAYF…ATMI). Glu-219 is a Zn(2+) binding site.

It belongs to the peptidase M48B family. It depends on Zn(2+) as a cofactor.

The protein resides in the cell inner membrane. The sequence is that of Protease HtpX from Stenotrophomonas maltophilia (strain R551-3).